The following is a 77-amino-acid chain: Acyl carrier protein (77 aa).

In terms of domain architecture, Carrier spans 1–76 (MSLEDDVKAI…DVIKYIQEHQ (76 aa)). Residue Ser-36 is modified to O-(pantetheine 4'-phosphoryl)serine.

It belongs to the acyl carrier protein (ACP) family. Post-translationally, 4'-phosphopantetheine is transferred from CoA to a specific serine of apo-ACP by AcpS. This modification is essential for activity because fatty acids are bound in thioester linkage to the sulfhydryl of the prosthetic group.

Its subcellular location is the cytoplasm. The protein operates within lipid metabolism; fatty acid biosynthesis. In terms of biological role, carrier of the growing fatty acid chain in fatty acid biosynthesis. The chain is Acyl carrier protein from Chlamydia trachomatis serovar L2 (strain ATCC VR-902B / DSM 19102 / 434/Bu).